We begin with the raw amino-acid sequence, 89 residues long: uncharacterized protein (89 aa).

This is an uncharacterized protein from Archaeoglobus fulgidus (strain ATCC 49558 / DSM 4304 / JCM 9628 / NBRC 100126 / VC-16).